A 609-amino-acid polypeptide reads, in one-letter code: Hemagglutinin glycoprotein (609 aa).

Over 1-34 the chain is Intravirion; it reads MSPPRDRVDAYYKDNFQFKNTRVVLNKEQLLIER. The chain crosses the membrane as a helical; Signal-anchor for type II membrane protein span at residues 35 to 58; that stretch reads PCMLLTVLFVMFLSLVGLLAIAGI. Over 59–609 the chain is Virion surface; it reads RLHRAAVNTA…VGIKITCNGK (551 aa). Residues Asn-168, Asn-187, Asn-200, Asn-215, and Asn-395 are each glycosylated (N-linked (GlcNAc...) asparagine; by host).

The protein belongs to the paramyxoviruses hemagglutinin-neuraminidase family. Non-sialidase subfamily.

It is found in the virion membrane. The protein localises to the host membrane. In terms of biological role, attaches the virus to cell receptors and thereby initiating infection. Binding of H protein to the receptor induces a conformational change that allows the F protein to trigger virion/cell membranes fusion. Down-regulates human MCP/CD46 cell surface expression. In Rinderpest virus (strain Kabete O) (RDV), this protein is Hemagglutinin glycoprotein (H).